The sequence spans 443 residues: MALQNIGAGNSDDAFYRYKMPRMVTKIEGRGNGIKTNVVNMVDIAKRLARPASYTTKYFGCELGAQSKFDEKTGTSHVNGAHETAKLAGLLEIFIKKYVQCYGCGNPETEILITKNQMIQLKCAACGFVSDVDMRDKLTTFIVKNPPEVKKGSKDKKAMRRAEKERLKEGEAADEELKKVKKEVKKKGSSSAKDGTAKSTISKKKGSGSDEDRRSPTHKQIEEKEEAKDEDDDDDDGVQWLTDTSLDASRQRIKEQLSAVTADMVMLTTDEPEKKKKAASNQNGGSQNGNSKNYGTVVAEVKANLKKGFGASELLSHLAALPVPAQEKMSALVEALFEGTEKGFGRETLKKKNYFAAAVAEEGSQILLLHAIEEFCCKPNSNALKEVALVLKTLYDADVLEEEAIVLWYQKGLKGDNKNSKIWKNAQPFIDWLQNAESESDEE.

Gly-29–Thr-36 serves as a coordination point for GTP. The segment covering Pro-147–Lys-178 has biased composition (basic and acidic residues). Disordered regions lie at residues Pro-147–Thr-244 and Glu-271–Asn-293. Residues Lys-179–Gly-188 are compositionally biased toward basic residues. Over residues Ser-207–Ala-227 the composition is skewed to basic and acidic residues. Acidic residues predominate over residues Lys-228–Gly-237. Over residues Ser-280–Ser-291 the composition is skewed to low complexity. Residues Gly-284–Glu-443 form the W2 domain.

This sequence belongs to the eIF-2-beta/eIF-5 family.

Catalyzes the hydrolysis of GTP bound to the 40S ribosomal initiation complex (40S.mRNA.Met-tRNA[F].eIF-2.GTP) with the subsequent joining of a 60S ribosomal subunit resulting in the release of eIF-2 and the guanine nucleotide. The subsequent joining of a 60S ribosomal subunit results in the formation of a functional 80S initiation complex (80S.mRNA.Met-tRNA[F]). In Phaseolus vulgaris (Kidney bean), this protein is Eukaryotic translation initiation factor 5 (EIF5).